Reading from the N-terminus, the 437-residue chain is Serine--tRNA ligase (437 aa).

227–229 (TAE) contacts L-serine. Residues 258–260 (RSE) and Val-274 contribute to the ATP site. Glu-281 is a binding site for L-serine. 347–350 (ETHS) is an ATP binding site. Thr-382 is an L-serine binding site.

It belongs to the class-II aminoacyl-tRNA synthetase family. Type-1 seryl-tRNA synthetase subfamily. In terms of assembly, homodimer. The tRNA molecule binds across the dimer.

Its subcellular location is the cytoplasm. It carries out the reaction tRNA(Ser) + L-serine + ATP = L-seryl-tRNA(Ser) + AMP + diphosphate + H(+). It catalyses the reaction tRNA(Sec) + L-serine + ATP = L-seryl-tRNA(Sec) + AMP + diphosphate + H(+). Its pathway is aminoacyl-tRNA biosynthesis; selenocysteinyl-tRNA(Sec) biosynthesis; L-seryl-tRNA(Sec) from L-serine and tRNA(Sec): step 1/1. In terms of biological role, catalyzes the attachment of serine to tRNA(Ser). Is also able to aminoacylate tRNA(Sec) with serine, to form the misacylated tRNA L-seryl-tRNA(Sec), which will be further converted into selenocysteinyl-tRNA(Sec). This chain is Serine--tRNA ligase, found in Deinococcus geothermalis (strain DSM 11300 / CIP 105573 / AG-3a).